We begin with the raw amino-acid sequence, 300 residues long: Probable mitochondrial 2-oxodicarboxylate carrier (300 aa).

The segment at 1-20 (MTSKGNAGNPPTPTPAPVKS) is disordered. 3 Solcar repeats span residues 21–104 (QPLW…YEKQ), 114–200 (PTQM…IKSA), and 209–295 (GVLV…VMKL). Helical transmembrane passes span 27–47 (LVSGGIAGVSEILVMYPLDVV), 74–93 (LKMYRGIVPPILVEAPKRAI), 120–140 (IGSGVLAGITEAFIVVPFELV), 171–191 (GFFKGLESTIWRHACWNGGYF), 209–229 (GVLVNNFIAGGLAGTFGTMLN), and 278–298 (LGPGGGILLVVNEFVMKLLAG).

Belongs to the mitochondrial carrier (TC 2.A.29) family.

The protein localises to the mitochondrion inner membrane. The catalysed reaction is 2-oxoadipate(in) + 2-oxoglutarate(out) = 2-oxoadipate(out) + 2-oxoglutarate(in). It catalyses the reaction hexanedioate(in) + 2-oxoglutarate(out) = hexanedioate(out) + 2-oxoglutarate(in). The enzyme catalyses L-2-aminoadipate(in) + 2-oxoglutarate(out) = L-2-aminoadipate(out) + 2-oxoglutarate(in). It carries out the reaction glutarate(in) + 2-oxoglutarate(out) = glutarate(out) + 2-oxoglutarate(in). The catalysed reaction is 2-oxoheptanedioate(in) + 2-oxoglutarate(out) = 2-oxoheptanedioate(out) + 2-oxoglutarate(in). It catalyses the reaction heptanedioate(in) + 2-oxoglutarate(out) = heptanedioate(out) + 2-oxoglutarate(in). The enzyme catalyses citrate(in) + 2-oxoglutarate(out) = citrate(out) + 2-oxoglutarate(in). Functionally, transports dicarboxylates across the inner membranes of mitochondria by a counter-exchange mechanism. Can transport 2-oxoadipate (2-oxohexanedioate), 2-oxoglutarate, adipate (hexanedioate), glutarate, and to a lesser extent, pimelate (heptanedioate), 2-oxopimelate (2-oxoheptanedioate), 2-aminoadipate (2-aminohexanedioate), oxaloacetate, and citrate. Plays a central role in catabolism of lysine, hydroxylysine, and tryptophan, by transporting common metabolite intermediates (such as 2-oxoadipate) into the mitochondria, where it is converted into acetyl-CoA and can enter the citric acid (TCA) cycle. The protein is Probable mitochondrial 2-oxodicarboxylate carrier (mcfT) of Dictyostelium discoideum (Social amoeba).